The following is a 201-amino-acid chain: Eukaryotic translation initiation factor 4E-5 (201 aa).

C122 and C126 are oxidised to a cystine.

This sequence belongs to the eukaryotic initiation factor 4E family. EIF4F is a multi-subunit complex, the composition of which varies with external and internal environmental conditions. It is composed of at least eIF4A, eIF4E and eIF4G. eIF4E is also known to interact with other partners. Enriched in the germline.

Its function is as follows. Recognizes and binds the 7-methylguanosine-containing mRNA cap during an early step in the initiation of protein synthesis and facilitates ribosome binding by inducing the unwinding of the mRNAs secondary structures. All 5 eIF4E proteins bind monomethyl cap structures. Only ife-1, ife-2 and ife-5 bind trimethyl cap structures which result from trans-splicing. Translation of trimethyl cap structure mRNAs may be regulated by intracellular redox state; disulfide bonds change the width and depth of the cap-binding cavity determining selectivity to mRNA caps. This chain is Eukaryotic translation initiation factor 4E-5 (ife-5), found in Caenorhabditis elegans.